The chain runs to 212 residues: Uridine kinase (212 aa).

Residue 13–20 (GASASGKS) participates in ATP binding.

The protein belongs to the uridine kinase family.

The protein resides in the cytoplasm. It catalyses the reaction uridine + ATP = UMP + ADP + H(+). The enzyme catalyses cytidine + ATP = CMP + ADP + H(+). Its pathway is pyrimidine metabolism; CTP biosynthesis via salvage pathway; CTP from cytidine: step 1/3. The protein operates within pyrimidine metabolism; UMP biosynthesis via salvage pathway; UMP from uridine: step 1/1. The chain is Uridine kinase from Shewanella piezotolerans (strain WP3 / JCM 13877).